The primary structure comprises 372 residues: Cytochrome b (372 aa).

Helical transmembrane passes span 25–45, 69–90, 105–125, and 170–190; these read FGSM…FLAI, WMMQ…YIHI, WLSG…GYVL, and FFAL…IHIM. Positions 75 and 89 each coordinate heme b. Heme b-binding residues include His-174 and His-188. A ubiquinone is bound at residue His-193. Transmembrane regions (helical) follow at residues 218-238, 280-300, 312-332, and 339-358; these read HKDM…MSFT, LGGT…PFTH, LMQF…WAAT, and FTSI…TMNP.

This sequence belongs to the cytochrome b family. As to quaternary structure, the cytochrome bc1 complex contains 3 respiratory subunits (MT-CYB, CYC1 and UQCRFS1), 2 core proteins (UQCRC1 and UQCRC2) and probably 6 low-molecular weight proteins. Requires heme b as cofactor.

The protein localises to the mitochondrion inner membrane. Its function is as follows. Component of the ubiquinol-cytochrome c reductase complex (complex III or cytochrome b-c1 complex) that is part of the mitochondrial respiratory chain. The b-c1 complex mediates electron transfer from ubiquinol to cytochrome c. Contributes to the generation of a proton gradient across the mitochondrial membrane that is then used for ATP synthesis. This chain is Cytochrome b (MT-CYB), found in Pantherophis vulpinus (Western fox snake).